Here is a 481-residue protein sequence, read N- to C-terminus: MSTICPPPSPAVAKTEIALSGESPLLAATFAYWDNILGPRVRHIWAPKTDQVLLSDGEITFLANHTLNGEILRNAESGAIDVKFFVLSEKGVIIVSLIFDGNWNGDRSTYGLSIILPQTELSFYLPLHRVCVDRLTHIIRKGRIWMHKERQENVQKIVLEGTERMEDQGQSIIPMLTGEVIPVMELLASMRSHSVPEDLDIADTVLNDDDIGDSCHEGFLLNAISSHLQTCGCSVVVGSSAEKVNKIVRTLCLFLTPAERKCSRLCEAESSFKYESGLFVQGLLKDATGSFVLPFRQVMYAPYPTTHIDVDVNTVKQMPPCHEHIYNQRRYMRSELTAFWRATSEEDMAQDTIIYTDESFTPDLNIFQDVLHRDTLVKAFLDQVFHLKPGLSLRSTFLAQFLLILHRKALTLIKYIEDDTQKGKKPFKSLRNLKIDLDLTAEGDLNIIMALAEKIKPGLHSFIFGRPFYTSVQERDVLMTF.

The region spanning 23–194 (SPLLAATFAY…ELLASMRSHS (172 aa)) is the uDENN C9ORF72-type domain. In terms of domain architecture, cDENN C9ORF72-type spans 200-343 (DIADTVLNDD…SELTAFWRAT (144 aa)). The dDENN C9ORF72-type domain maps to 370-464 (VLHRDTLVKA…IKPGLHSFIF (95 aa)). The interval 461–481 (SFIFGRPFYTSVQERDVLMTF) is required for the homodimerization of the C9orf72-SMCR8 complex.

As to quaternary structure, component of the C9orf72-SMCR8 complex, at least composed of C9orf72, SMCR8 and WDR41. The complex is formed of two protomers, each individually consisting of one molecule each of C9orf72, SMCR8 and WDR41. The protomers homodimerize via an interaction between C9orf72 (via C-terminus) and SMCR8 (via N-terminus). Within each protomer SMCR8 (via DENN domain) acts as a bridging protein between WDR41 (via C-terminus and N-terminus) and C9orf72 (via C-terminus). The C9orf72-SMCR8 complex associates with the ULK1/ATG1 kinase complex. Interacts with ULK1/ATG1 kinase complex members ULK1, ATG13 and RB1CC1. Interacts with SMCR8; the interaction is direct. Interacts with HNRNPA1, HNRNPA2B1 and UBQLN2. Interacts with small Rab GTPase RAB1A; the interaction mediates recruitment of RAB1A to the ULK1/ATG1 kinase complex. Also interacts with small Rab GTPase RAB7A. Interacts with cofilin. Interacts with GTP-binding proteins ARF1 and ARF6. Interacts with the DLG4/PSD-95. Interacts with CARM1 (via PH domain-like fold). Interacts with RAB39A and RAB39B (in GDP-bound forms); functions as GEF for RAB39A and RAB39B.

Its subcellular location is the nucleus. It localises to the cytoplasm. The protein localises to the P-body. It is found in the stress granule. The protein resides in the endosome. Its subcellular location is the lysosome. It localises to the cytoplasmic vesicle. The protein localises to the autophagosome. It is found in the autolysosome. The protein resides in the secreted. Its subcellular location is the cell projection. It localises to the axon. The protein localises to the growth cone. It is found in the perikaryon. Acts as a guanine-nucleotide releasing factor (GEF) for Rab GTPases by promoting the conversion of inactive RAB-GDP to the active form RAB-GTP. Acts as a GEF for RAB39A which enables HOPS-mediated autophagosome-lysosome membrane tethering and fusion in mammalian autophagy. Component of the C9orf72-SMCR8 complex where both subunits display GEF activity and that regulates autophagy. As part of the C9orf72-SMCR8-WDR41 (CSW) complex, functions as GEF for RAB8A and RAB39B, thereby promoting autophagosome maturation. As part of the C9orf72-SMCR8 complex, also functions as GTPase activating protein (GAP) for RAB8A and RAB11A in vitro. The C9orf72-SMCR8 complex also acts as a regulator of autophagy initiation by interacting with the ULK1/ATG1 kinase complex and modulating its protein kinase activity. Promotes initiation of autophagy by regulating the RAB1A-dependent trafficking of the ULK1/ATG1 kinase complex to the phagophore which leads to autophagosome formation. Acts as a regulator of mTORC1 signaling by promoting phosphorylation of mTORC1 substrates. Plays a role in endosomal trafficking. May be involved in regulating the maturation of phagosomes to lysosomes. Promotes the lysosomal localization and lysosome-mediated degradation of CARM1 which leads to inhibition of starvation-induced lipid metabolism. Regulates actin dynamics in motor neurons by inhibiting the GTP-binding activity of ARF6, leading to ARF6 inactivation. This reduces the activity of the LIMK1 and LIMK2 kinases which are responsible for phosphorylation and inactivation of cofilin, leading to CFL1/cofilin activation. Positively regulates axon extension and axon growth cone size in spinal motor neurons. Required for SMCR8 protein expression and localization at pre- and post-synaptic compartments in the forebrain, also regulates protein abundance of RAB3A and GRIA1/GLUR1 in post-synaptic compartments in the forebrain and hippocampus. Plays a role within the hematopoietic system in restricting inflammation and the development of autoimmunity. This chain is Guanine nucleotide exchange factor C9orf72 homolog, found in Rattus norvegicus (Rat).